The following is a 590-amino-acid chain: Arginine--tRNA ligase (590 aa).

A 'HIGH' region motif is present at residues 138 to 148; that stretch reads ANPTGPLHIGH.

It belongs to the class-I aminoacyl-tRNA synthetase family. In terms of assembly, monomer.

It is found in the cytoplasm. The catalysed reaction is tRNA(Arg) + L-arginine + ATP = L-arginyl-tRNA(Arg) + AMP + diphosphate. The protein is Arginine--tRNA ligase of Orientia tsutsugamushi (strain Ikeda) (Rickettsia tsutsugamushi).